We begin with the raw amino-acid sequence, 194 residues long: Ras-related protein Rab-22A (194 aa).

Residue 12-20 (GDTGVGKSS) participates in GTP binding. An Effector region motif is present at residues 34 to 42 (INPTIGASF). GTP is bound by residues 60–64 (DTAGQ), 118–121 (NKCD), and 148–150 (SAK). The segment at 174–194 (PSGGKGFKLRRQPSEPKRSCC) is disordered. The segment covering 185–194 (QPSEPKRSCC) has biased composition (basic and acidic residues). 2 S-geranylgeranyl cysteine lipidation sites follow: cysteine 193 and cysteine 194.

The protein belongs to the small GTPase superfamily. Rab family. Interacts directly with ZFYVE20. Binds EEA1. Interacts (in its GTP-bound form) with RABGEF1. Interacts (in its GTP-bound form) with RINL.

It is found in the endosome membrane. The protein resides in the cell membrane. The protein localises to the early endosome. It localises to the late endosome. Its subcellular location is the cell projection. It is found in the ruffle. The protein resides in the cytoplasmic vesicle. The protein localises to the phagosome. It localises to the phagosome membrane. In terms of biological role, plays a role in endocytosis and intracellular protein transport. Mediates trafficking of TF from early endosomes to recycling endosomes. Required for NGF-mediated endocytosis of NTRK1, and subsequent neurite outgrowth. Binds GTP and GDP and has low GTPase activity. Alternates between a GTP-bound active form and a GDP-bound inactive form. This Homo sapiens (Human) protein is Ras-related protein Rab-22A (RAB22A).